The chain runs to 201 residues: Ribonuclease HII (201 aa).

Residues 12–201 enclose the RNase H type-2 domain; that stretch reads DLVAGVDEVG…VRELLDVSVQ (190 aa). 3 residues coordinate a divalent metal cation: D18, E19, and D110.

It belongs to the RNase HII family. It depends on Mn(2+) as a cofactor. The cofactor is Mg(2+).

It is found in the cytoplasm. It carries out the reaction Endonucleolytic cleavage to 5'-phosphomonoester.. Endonuclease that specifically degrades the RNA of RNA-DNA hybrids. The polypeptide is Ribonuclease HII (Pseudomonas aeruginosa (strain ATCC 15692 / DSM 22644 / CIP 104116 / JCM 14847 / LMG 12228 / 1C / PRS 101 / PAO1)).